Here is a 252-residue protein sequence, read N- to C-terminus: uncharacterized protein (252 aa).

Residues 96-238 (FRRFTPRARN…ITTLASLTGA (143 aa)) enclose the Clp R domain. Repeat stretches follow at residues 99–164 (FTPR…PAVT) and 172–238 (FSGP…LTGA).

The protein belongs to the ClpA/ClpB family. ClpC subfamily.

This is an uncharacterized protein from Mycobacterium bovis (strain ATCC BAA-935 / AF2122/97).